Reading from the N-terminus, the 159-residue chain is Transcription antitermination protein NusB (159 aa).

The disordered stretch occupies residues 1–20 (MNKNTQGKPSGKPVRRDGVD).

It belongs to the NusB family.

Involved in transcription antitermination. Required for transcription of ribosomal RNA (rRNA) genes. Binds specifically to the boxA antiterminator sequence of the ribosomal RNA (rrn) operons. This is Transcription antitermination protein NusB from Stenotrophomonas maltophilia (strain R551-3).